We begin with the raw amino-acid sequence, 162 residues long: Large ribosomal subunit protein bL9 (162 aa).

Belongs to the bacterial ribosomal protein bL9 family.

Functionally, binds to the 23S rRNA. The chain is Large ribosomal subunit protein bL9 from Chlorobaculum parvum (strain DSM 263 / NCIMB 8327) (Chlorobium vibrioforme subsp. thiosulfatophilum).